Consider the following 118-residue polypeptide: Non-specific lipid-transfer protein 5 (118 aa).

Positions 1–25 (MEGLLKLSTLVIVCMLVTAPMASEA) are cleaved as a signal peptide. 4 disulfides stabilise this stretch: C29–C76, C39–C53, C54–C100, and C74–C114.

The protein belongs to the plant LTP family.

In terms of biological role, plant non-specific lipid-transfer proteins transfer phospholipids as well as galactolipids across membranes. May play a role in wax or cutin deposition in the cell walls of expanding epidermal cells and certain secretory tissues. The sequence is that of Non-specific lipid-transfer protein 5 (LTP5) from Arabidopsis thaliana (Mouse-ear cress).